A 132-amino-acid chain; its full sequence is Small ribosomal subunit protein uS8 (132 aa).

This sequence belongs to the universal ribosomal protein uS8 family. As to quaternary structure, part of the 30S ribosomal subunit. Contacts proteins S5 and S12.

Functionally, one of the primary rRNA binding proteins, it binds directly to 16S rRNA central domain where it helps coordinate assembly of the platform of the 30S subunit. The protein is Small ribosomal subunit protein uS8 of Francisella tularensis subsp. holarctica (strain FTNF002-00 / FTA).